A 184-amino-acid polypeptide reads, in one-letter code: ATP synthase subunit b, chloroplastic (184 aa).

The chain crosses the membrane as a helical span at residues 27–49; it reads LATNLINLSVVLGVLVFFGKGVL.

It belongs to the ATPase B chain family. In terms of assembly, F-type ATPases have 2 components, F(1) - the catalytic core - and F(0) - the membrane proton channel. F(1) has five subunits: alpha(3), beta(3), gamma(1), delta(1), epsilon(1). F(0) has four main subunits: a(1), b(1), b'(1) and c(10-14). The alpha and beta chains form an alternating ring which encloses part of the gamma chain. F(1) is attached to F(0) by a central stalk formed by the gamma and epsilon chains, while a peripheral stalk is formed by the delta, b and b' chains.

The protein resides in the plastid. It is found in the chloroplast thylakoid membrane. F(1)F(0) ATP synthase produces ATP from ADP in the presence of a proton or sodium gradient. F-type ATPases consist of two structural domains, F(1) containing the extramembraneous catalytic core and F(0) containing the membrane proton channel, linked together by a central stalk and a peripheral stalk. During catalysis, ATP synthesis in the catalytic domain of F(1) is coupled via a rotary mechanism of the central stalk subunits to proton translocation. Functionally, component of the F(0) channel, it forms part of the peripheral stalk, linking F(1) to F(0). This Cicer arietinum (Chickpea) protein is ATP synthase subunit b, chloroplastic.